The primary structure comprises 392 residues: Chalcone synthase B (392 aa).

The active site involves Cys-167.

It belongs to the thiolase-like superfamily. Chalcone/stilbene synthases family. In terms of tissue distribution, expressed at low level in seedlings after illumination with UV light. No expression in flowers or tissue culture.

The enzyme catalyses (E)-4-coumaroyl-CoA + 3 malonyl-CoA + 3 H(+) = 2',4,4',6'-tetrahydroxychalcone + 3 CO2 + 4 CoA. It participates in secondary metabolite biosynthesis; flavonoid biosynthesis. The primary product of this enzyme is 4,2',4',6'-tetrahydroxychalcone (also termed naringenin-chalcone or chalcone) which can under specific conditions spontaneously isomerize into naringenin. The sequence is that of Chalcone synthase B (CHSB) from Petunia hybrida (Petunia).